The following is a 420-amino-acid chain: Type II methyltransferase M.HgiCI (420 aa).

Residues 2 to 417 (LKFIDLFAGI…LDLFKSADLA (416 aa)) enclose the SAM-dependent MTase C5-type domain. Residue cysteine 75 is part of the active site.

Belongs to the class I-like SAM-binding methyltransferase superfamily. C5-methyltransferase family.

It carries out the reaction a 2'-deoxycytidine in DNA + S-adenosyl-L-methionine = a 5-methyl-2'-deoxycytidine in DNA + S-adenosyl-L-homocysteine + H(+). Functionally, a methylase that recognizes the double-stranded sequence 5'-GGYRCC-3', methylates C-5 on both strands, and protects the DNA from cleavage by the HgiCI endonuclease. The sequence is that of Type II methyltransferase M.HgiCI (hgiCIM) from Herpetosiphon aurantiacus (Herpetosiphon giganteus).